Reading from the N-terminus, the 268-residue chain is LOB domain-containing protein 13 (268 aa).

Positions 51-152 (TPCAACKLLR…SELTTVRTEI (102 aa)) constitute an LOB domain. The segment at 191–268 (LLPPPPPPPP…SSDNNVHYFD (78 aa)) is disordered. 2 stretches are compositionally biased toward pro residues: residues 192 to 205 (LPPP…PRPP) and 212 to 222 (PAPPPTPPVSL). Positions 223-243 (PSPSMVVSSSSSSNSSATNSM) are enriched in low complexity. The span at 250 to 268 (STAGYSNSLSSDNNVHYFD) shows a compositional bias: polar residues.

Belongs to the LOB domain-containing protein family. In terms of tissue distribution, expressed in shoots and roots and at low levels in flowers, but not in leaves or inflorescence stems.

In Arabidopsis thaliana (Mouse-ear cress), this protein is LOB domain-containing protein 13 (LBD13).